The following is a 270-amino-acid chain: Protein US2 homolog (270 aa).

Belongs to the herpesviridae US2 family.

This Gallid herpesvirus 2 (strain Chicken/Md5/ATCC VR-987) (GaHV-2) protein is Protein US2 homolog (MDV091).